A 190-amino-acid chain; its full sequence is Holliday junction branch migration complex subunit RuvA (190 aa).

Positions 1 to 64 (MIGRISGQLA…EDAQILYGFG (64 aa)) are domain I. The tract at residues 65 to 137 (SATERAAFRQ…LKGKLGADIG (73 aa)) is domain II. The flexible linker stretch occupies residues 137–141 (GVQVS). The tract at residues 142-190 (VSSDSQSDILQALVALGYSDRDAALALKALPKDIGVSDGIKLALKALAK) is domain III.

The protein belongs to the RuvA family. As to quaternary structure, homotetramer. Forms an RuvA(8)-RuvB(12)-Holliday junction (HJ) complex. HJ DNA is sandwiched between 2 RuvA tetramers; dsDNA enters through RuvA and exits via RuvB. An RuvB hexamer assembles on each DNA strand where it exits the tetramer. Each RuvB hexamer is contacted by two RuvA subunits (via domain III) on 2 adjacent RuvB subunits; this complex drives branch migration. In the full resolvosome a probable DNA-RuvA(4)-RuvB(12)-RuvC(2) complex forms which resolves the HJ.

It localises to the cytoplasm. Functionally, the RuvA-RuvB-RuvC complex processes Holliday junction (HJ) DNA during genetic recombination and DNA repair, while the RuvA-RuvB complex plays an important role in the rescue of blocked DNA replication forks via replication fork reversal (RFR). RuvA specifically binds to HJ cruciform DNA, conferring on it an open structure. The RuvB hexamer acts as an ATP-dependent pump, pulling dsDNA into and through the RuvAB complex. HJ branch migration allows RuvC to scan DNA until it finds its consensus sequence, where it cleaves and resolves the cruciform DNA. The protein is Holliday junction branch migration complex subunit RuvA of Polaromonas sp. (strain JS666 / ATCC BAA-500).